The chain runs to 762 residues: MSSHITLIKTNTNNENQMTQFNYKVDNDVMIIRAMVNNVAKQITPVWPLEKFIACNSLHGFESMSFEEAVIQNQTAKKGTPFNEKLERVNWHMIKWCGSFLDIGQGTLEMPHRDKGLYFGFLKLAPFDSELHQNNKSTKSWLSNLPEMPEQAIRLCLNKLGVLNQKQEKFLKSTLSHLPGWAGYIKWISEWKNRNGKEENPVSLADFLAVRLIITCVLWPEASQEEKKKKKDNAYTKQLIQNIKNKEDDYRQLLLNKLLPELDKVQIKENRANAQMVFCIDVRSEPFRRCIEKLGHYETLGFAGFFGLPVSIKDYDGETIKDSCPVLLKPRFNIHEKAIAANEHCIEHHEKGKEFKNILNRIYQQLKYNFSTPFALVESLGIWCGITMFLKSCSPIFARRLTKDLNEMICPSIQTQPVFELDLLEKEVGISLQEQIAYAEMALRLMGLTDNFAKLVIFCGHGSSTQNNPYASALDCGACGGNQGGKNAQLLASILNKIIVRRALAENGINIPQDTLFYGAQHDTTTDEVEIYHSNVSQFIHQDILDQLRTDLNIAKHNNNLERINYLNSIDCAEKDIARRSTDWSETRPEWGLARNAAFIVAPRQLTKNINLEGRCFLHSYDWSQDKDGALLETILTAPMVVAQWINTQYLFSTIDNVAYGSGSKITHNVAGKIGVMQGNASDLMHGLPLQSVMSHDDKSFHEPQRLLTLVYAPREIISELVEKHDVLKTLFFNEWVHLVAIDPRSHLFYKLEKTNTWSVIQ.

Residues Cys279, Asp281, His461, and Cys476 each contribute to the Zn(2+) site.

It belongs to the inorganic carbon transporter (TC 9.A.2) DabA family. Forms a complex with DabB. Zn(2+) is required as a cofactor.

It localises to the cell inner membrane. Its function is as follows. Part of an energy-coupled inorganic carbon pump. The chain is Probable inorganic carbon transporter subunit DabA from Legionella pneumophila (strain Corby).